Here is a 204-residue protein sequence, read N- to C-terminus: Guanylate kinase (204 aa).

Positions 1–182 constitute a Guanylate kinase-like domain; that stretch reads MLYIISAPSG…ALSDLNTIIC (182 aa). 7–14 serves as a coordination point for ATP; that stretch reads APSGTGKS.

This sequence belongs to the guanylate kinase family.

Its subcellular location is the cytoplasm. It carries out the reaction GMP + ATP = GDP + ADP. Functionally, essential for recycling GMP and indirectly, cGMP. This chain is Guanylate kinase, found in Baumannia cicadellinicola subsp. Homalodisca coagulata.